Here is a 123-residue protein sequence, read N- to C-terminus: Large ribosomal subunit protein bL12 (123 aa).

It belongs to the bacterial ribosomal protein bL12 family. Homodimer. Part of the ribosomal stalk of the 50S ribosomal subunit. Forms a multimeric L10(L12)X complex, where L10 forms an elongated spine to which 2 to 4 L12 dimers bind in a sequential fashion. Binds GTP-bound translation factors.

Forms part of the ribosomal stalk which helps the ribosome interact with GTP-bound translation factors. Is thus essential for accurate translation. In Rhodospirillum rubrum (strain ATCC 11170 / ATH 1.1.1 / DSM 467 / LMG 4362 / NCIMB 8255 / S1), this protein is Large ribosomal subunit protein bL12.